A 390-amino-acid polypeptide reads, in one-letter code: 5-hydroxytryptamine receptor 1B (390 aa).

The Extracellular portion of the chain corresponds to 1 to 46 (MEEPGAQCAPPLAAGSQIAVPQANLSAAHSHNCSAEGYIYQDSIAL). Residues asparagine 24 and asparagine 32 are each glycosylated (N-linked (GlcNAc...) asparagine). The helical transmembrane segment at 47–72 (PWKVLLVLLLALFTLATTLSNAFVVA) threads the bilayer. The Cytoplasmic portion of the chain corresponds to 73-86 (TVYRTRKLHTPANY). The chain crosses the membrane as a helical span at residues 87 to 111 (LIASLAVTDLLVSILVMPISTMYTV). The Extracellular portion of the chain corresponds to 112 to 119 (TGRWTLGQ). Residues 120-145 (VVCDLWLSSDITCCTASIMHLCVIAL) form a helical membrane-spanning segment. The cysteines at positions 122 and 199 are disulfide-linked. Ergotamine contacts are provided by aspartate 129 and threonine 134. Positions 146–148 (DRY) match the DRY motif; important for ligand-induced conformation changes and signaling motif. Residues 146–165 (DRYWAITDAVEYSAKRTPKR) lie on the Cytoplasmic side of the membrane. The helical transmembrane segment at 166–184 (AAIMIRLVWVFSICISLPP) threads the bilayer. The Extracellular segment spans residues 185 to 205 (FFWRQAKAEEEVSECLVNTDH). Valine 201 lines the ergotamine pocket. Residues 206–229 (VLYTVYSTVGAFYLPTLLLIALYG) traverse the membrane as a helical segment. Over 230–315 (RIYVEARSRI…AARERKATKT (86 aa)) the chain is Cytoplasmic. Polar residues predominate over residues 260–272 (SPGSTTSVTSINS). The interval 260–282 (SPGSTTSVTSINSRAPDVPSESG) is disordered. Residues 316-337 (LGIILGVFIVCWLPFFIISLVM) form a helical membrane-spanning segment. Over 338-347 (PICKDACWFH) the chain is Extracellular. A helical membrane pass occupies residues 348–370 (QAIFDFFTWLGYVNSLINPIIYT). Residues 365–369 (NPIIY) carry the NPxxY motif; important for ligand-induced conformation changes and signaling motif. At 371–390 (MSNEDFKQAFHKLIRFKCTS) the chain is on the cytoplasmic side. Cysteine 388 is lipidated: S-palmitoyl cysteine.

The protein belongs to the G-protein coupled receptor 1 family. As to quaternary structure, homodimer. Heterodimer with HTR1D. Phosphorylated. Desensitization of the receptor may be mediated by its phosphorylation. Post-translationally, palmitoylated.

It is found in the cell membrane. In terms of biological role, G-protein coupled receptor for 5-hydroxytryptamine (serotonin). Also functions as a receptor for ergot alkaloid derivatives, various anxiolytic and antidepressant drugs and other psychoactive substances, such as lysergic acid diethylamide (LSD). Ligand binding causes a conformation change that triggers signaling via guanine nucleotide-binding proteins (G proteins) and modulates the activity of downstream effectors, such as adenylate cyclase. HTR1B is coupled to G(i)/G(o) G alpha proteins and mediates inhibitory neurotransmission by inhibiting adenylate cyclase activity. Arrestin family members inhibit signaling via G proteins and mediate activation of alternative signaling pathways. Regulates the release of 5-hydroxytryptamine, dopamine and acetylcholine in the brain, and thereby affects neural activity, nociceptive processing, pain perception, mood and behavior. Besides, plays a role in vasoconstriction of cerebral arteries. The polypeptide is 5-hydroxytryptamine receptor 1B (HTR1B) (Oryctolagus cuniculus (Rabbit)).